A 448-amino-acid polypeptide reads, in one-letter code: Biotin carboxylase (448 aa).

The Biotin carboxylation domain occupies 1-445; sequence MLEKVVIANR…NIHYLEKKLG (445 aa). ATP contacts are provided by residues lysine 116, lysine 159, 165 to 166, 201 to 204, histidine 209, and histidine 236; these read GG and EKYL. The 198-residue stretch at 120-317 folds into the ATP-grasp domain; sequence IKAMKKAGVP…LVKEQLRIAA (198 aa). Position 238 (lysine 238) interacts with hydrogencarbonate. Residues glutamate 276 and glutamate 288 each contribute to the ATP site. Mg(2+) is bound by residues glutamate 276, glutamate 288, and asparagine 290. The Mn(2+) site is built by glutamate 276, glutamate 288, and asparagine 290. Hydrogencarbonate is bound by residues arginine 292, valine 295, and arginine 338. Residue arginine 292 is part of the active site. A biotin-binding site is contributed by arginine 338.

As to quaternary structure, acetyl-CoA carboxylase is a heterohexamer of biotin carboxyl carrier protein, biotin carboxylase and the two subunits of carboxyl transferase in a 2:2 complex. The cofactor is Mg(2+). Mn(2+) is required as a cofactor.

The catalysed reaction is N(6)-biotinyl-L-lysyl-[protein] + hydrogencarbonate + ATP = N(6)-carboxybiotinyl-L-lysyl-[protein] + ADP + phosphate + H(+). Its pathway is lipid metabolism; malonyl-CoA biosynthesis; malonyl-CoA from acetyl-CoA: step 1/1. This protein is a component of the acetyl coenzyme A carboxylase complex; first, biotin carboxylase catalyzes the carboxylation of the carrier protein and then the transcarboxylase transfers the carboxyl group to form malonyl-CoA. This chain is Biotin carboxylase (accC), found in Haemophilus influenzae (strain ATCC 51907 / DSM 11121 / KW20 / Rd).